A 288-amino-acid polypeptide reads, in one-letter code: MKIAVYGKGGIGKSTTSCNISIALARRGKKVLQIGCDPKHDSTFTLTGFLIPTIIDTLQSKDYHYEDVWPEDVIYKGYGEVNCVEAGGPPAGAGCGGYVVGETVKLLKELNAFYEYDVILFDVLGDVVCGGFAAPLNYADYCIIITDNGFDALFAANRIAASVREKARTHPLRLAGLVGNRTSKRDLIDKYVEACPMPVLEVLPLIEDIRVSRVKGKTLFEMAETDSSLEYVCDYYLNIADQILSQPEGIVPKEIPDRELFTLLSDFYLNININSNNLEKNESSFLII.

ATP is bound by residues 10-15 (GIGKST) and Lys-39. Position 14 (Ser-14) interacts with Mg(2+). 2 residues coordinate [4Fe-4S] cluster: Cys-95 and Cys-129. 180–181 (NR) serves as a coordination point for ATP.

This sequence belongs to the NifH/BchL/ChlL family. In terms of assembly, homodimer. Protochlorophyllide reductase is composed of three subunits; ChlL, ChlN and ChlB. [4Fe-4S] cluster is required as a cofactor.

It is found in the plastid. Its subcellular location is the chloroplast. It catalyses the reaction chlorophyllide a + oxidized 2[4Fe-4S]-[ferredoxin] + 2 ADP + 2 phosphate = protochlorophyllide a + reduced 2[4Fe-4S]-[ferredoxin] + 2 ATP + 2 H2O. Its pathway is porphyrin-containing compound metabolism; chlorophyll biosynthesis (light-independent). Its function is as follows. Component of the dark-operative protochlorophyllide reductase (DPOR) that uses Mg-ATP and reduced ferredoxin to reduce ring D of protochlorophyllide (Pchlide) to form chlorophyllide a (Chlide). This reaction is light-independent. The L component serves as a unique electron donor to the NB-component of the complex, and binds Mg-ATP. The protein is Light-independent protochlorophyllide reductase iron-sulfur ATP-binding protein of Chara vulgaris (Common stonewort).